Here is a 201-residue protein sequence, read N- to C-terminus: Retinol binding protein 4 (201 aa).

A signal peptide spans 1-18 (MAWVWALVLLAALGSARA). Cystine bridges form between Cys-22–Cys-178, Cys-88–Cys-192, and Cys-138–Cys-147. Substrate is bound at residue Gln-116. Position 139 is an omega-N-methylarginine (Arg-139).

The protein belongs to the calycin superfamily. Lipocalin family. In terms of assembly, interacts with TTR. Interaction with TTR prevents its loss by filtration through the kidney glomeruli. Interacts with STRA6. Highly expressed in liver. Also expressed in adipose tissue. Expressed by endometrium from days 16-25 and by unattached chorioallantois from days 30-36 during pregnancy.

Its subcellular location is the secreted. In terms of biological role, retinol-binding protein that mediates retinol transport in blood plasma. Delivers retinol from the liver stores to the peripheral tissues. Transfers the bound all-trans retinol to STRA6, that then facilitates retinol transport across the cell membrane. The chain is Retinol binding protein 4 from Felis catus (Cat).